The sequence spans 249 residues: 1-(5-phosphoribosyl)-5-[(5-phosphoribosylamino)methylideneamino] imidazole-4-carboxamide isomerase (249 aa).

The Proton acceptor role is filled by Asp-8. Asp-131 functions as the Proton donor in the catalytic mechanism.

Belongs to the HisA/HisF family.

It localises to the cytoplasm. It catalyses the reaction 1-(5-phospho-beta-D-ribosyl)-5-[(5-phospho-beta-D-ribosylamino)methylideneamino]imidazole-4-carboxamide = 5-[(5-phospho-1-deoxy-D-ribulos-1-ylimino)methylamino]-1-(5-phospho-beta-D-ribosyl)imidazole-4-carboxamide. It participates in amino-acid biosynthesis; L-histidine biosynthesis; L-histidine from 5-phospho-alpha-D-ribose 1-diphosphate: step 4/9. This is 1-(5-phosphoribosyl)-5-[(5-phosphoribosylamino)methylideneamino] imidazole-4-carboxamide isomerase from Aromatoleum aromaticum (strain DSM 19018 / LMG 30748 / EbN1) (Azoarcus sp. (strain EbN1)).